The sequence spans 453 residues: Serine/threonine-protein phosphatase 2A regulatory subunit B'' subunit gamma (453 aa).

2 consecutive EF-hand domains span residues 273-308 and 341-376; these read PSAL…TMTN and KEPA…IQEL. Residues Asp286, Asp288, Asn290, Met292, and Glu297 each coordinate Ca(2+).

Interacts with MCM3AP/GANP. Interacts with PPP5C, and the phosphatase 2A core enzyme composed of the PPP2CA catalytic subunit and the constant regulatory subunit PPP2R1A. Finds in a complex with ABCB1, TFPI2 and PPP2R3C; leading to the dephosphorylation of ABCB1. Ubiquitously expressed in brain and other tissues.

It is found in the nucleus. The protein resides in the cytoplasm. Its function is as follows. May regulate MCM3AP phosphorylation through phosphatase recruitment. May act as a negative regulator of ABCB1 expression and function through the dephosphorylation of ABCB1 by TFPI2/PPP2R3C complex. May play a role in the activation-induced cell death of B-cells. This Homo sapiens (Human) protein is Serine/threonine-protein phosphatase 2A regulatory subunit B'' subunit gamma (PPP2R3C).